The following is a 249-amino-acid chain: MSVEASRTCFLIDSLLNKKPKEELETEEEDEEEDEEEELSSSEVTSENDMETESASSSASSVGQPKPDFSAFHKIFSNLDFAKLAAVKRNGHHQPMLFRPECFFPLELSKHLHLVQQTFQMNVLQNLGHTLPLPFVPMLKNVAPAQKRLNNKRASYVDHSQKGNLKKYRCDVCDKTFSRSNTLITHKRIHTGEKPFKCEHCGRAFRQPGNLTRHRLTHTTVKPYVCGLCDKAFNRASNLHTHMRTHTNV.

The tract at residues 20–65 is disordered; the sequence is PKEELETEEEDEEEDEEEELSSSEVTSENDMETESASSSASSVGQP. The span at 24–52 shows a compositional bias: acidic residues; that stretch reads LETEEEDEEEDEEEELSSSEVTSENDMET. 3 consecutive C2H2-type zinc fingers follow at residues 168–190, 196–218, and 224–246; these read YRCD…KRIH, FKCE…RLTH, and YVCG…MRTH.

In larva and adult, expressed in the M3 pharyngeal motor neurons, extrapharyngeal neurons in the head, the PQR tail neurons, rectal cells, vulva cells, the spermetheca-uterine valve, body wall muscle cells and neurons of the ventral nerve cord. In the embryo, expressed in pharyngeal cells, extrapharyngeal head neurons and within the tail. Expressed in body wall muscle cells during late embryonic stages. Expressed in the mother cells of the M2 and M3 pharyngeal motor neurons precursor cells at the embryonic bean stage and subsequently in the M2 and M3 cells as they are born. Expression is sustained only in the two M3 cells up to at least the 5-day-old adult. In contrast, expression gradually declines in the M2 cells beginning from the time of their birth, and is completely undetectable by the time of hatching.

It is found in the nucleus. Its function is as follows. Required in the M3 pharyngeal motor neuron to guide the growth cone of the sister M2 motor neuron during axon development. The polypeptide is Zinc finger protein mnm-2 (Caenorhabditis elegans).